Consider the following 758-residue polypeptide: Inhibitor of nuclear factor kappa-B kinase subunit alpha (758 aa).

The Protein kinase domain occupies 15-301 (WVMKERLGTG…LNTDSKQPQC (287 aa)). ATP is bound by residues 21-29 (LGTGGFGHV) and Lys44. Residue Asp145 is the Proton acceptor of the active site. Positions 456–477 (LLRFNTNLTRYKNMMFSFSQQL) are leucine-zipper. The segment at 741–746 (QDWSWT) is NEMO-binding.

It belongs to the protein kinase superfamily. Ser/Thr protein kinase family. I-kappa-B kinase subfamily. In terms of assembly, directly interacts with ikbkg/nemo.

It is found in the cytoplasm. Its subcellular location is the nucleus. It catalyses the reaction L-seryl-[I-kappa-B protein] + ATP = O-phospho-L-seryl-[I-kappa-B protein] + ADP + H(+). Activated when phosphorylated and inactivated when dephosphorylated. Its function is as follows. Phosphorylates inhibitors of NF-kappa-B thus leading to the dissociation of the inhibitor/NF-kappa-B complex and ultimately the degradation of the inhibitor. Phosphorylates 'Ser-10' of histone H3 at NF-kappa-B-regulated promoters during inflammatory responses triggered by cytokines. The protein is Inhibitor of nuclear factor kappa-B kinase subunit alpha (chuk) of Danio rerio (Zebrafish).